We begin with the raw amino-acid sequence, 477 residues long: Homospermidine synthase (477 aa).

This sequence belongs to the saccharopine dehydrogenase family. Homodimer. NAD(+) is required as a cofactor.

The enzyme catalyses 2 putrescine = sym-homospermidine + NH4(+). It catalyses the reaction putrescine + spermidine = sym-homospermidine + propane-1,3-diamine. Involved in the NAD(+)-dependent synthesis of the polyamine homospermidine from putrescine. The sequence is that of Homospermidine synthase (hss) from Blastochloris viridis (Rhodopseudomonas viridis).